The sequence spans 939 residues: MNEDQFPKAYDPKSSETGVYSFWERSGMFVANASSEKPAYSIVMPPPNVTGILHMGHALVNTLQDTLIRYKRMQGFEVCWVPGTDHAGIATQTVVERHLKASLGKRRTDFSREEFLKHVWDWKEKSQNVILSQLRQLGCSCDWSRQRFTMDPGANRAVKKAFKILFDKGVIYRGYYLVNWDPILQTALADDEVEYEERDGWLYYIRYQVVNSEEFITVATTRPETLLGDTAIAVSPEDQRYSHLIGAKVVVPFVNREIPIIGDFSVDASFGTGAVKITPAHDKDDYKTGMNHQLPMINILTPTGEINENGGIFTGLSREVARENIITSLEALGLFVKKEAYSSRVGVSYRSGAIIEPYLSKQWFVSVDSFRDSLREFVNSEEIRIFPPEFVRNYLTWVNNLKDWCISRQLWWGHRIPVWHNKHDENVICFDGEGGPEEVMRDPESWYQDPDVLDTWFSSGLWPLTCFGWPDEDSLDLKKFYPTAVLVTGHDILFFWVTRMVLMCSAMVDTEPFSDVFLHGLIFGKSYREYDEKGEWFYVSGERKRDYDKGKALPKNVVAKWEKLSKSKGNVIDPIEMIEAYGADAVRLTLCSCANRGEQIDLDYRLFEEYKNFINKLWNGARFIFGHISELTSRDLEEGVNQDLLGLEDFYILDRFNELLDLIDGHYNCYSFDKIASLAYDFFKNDLCSTYLEIIKPTLFGKQGSDQQRATKRKLLATLLINILGVLHPIVPYITETLFQKLKATLGTVENGKGDSVTGHAVSMLRSEACMVAEYPKPIHVAFPQGLRESFGIAERLVYTIRNIRGEMQLDPREPLQAFVISSEKKELVDVCIPIMCALGGVKTVEQLAEAPKDSIFSLGVVEGIQVGVILPPEHLAKERVRLEKEKTRLEKSIDSVSKLLASEDFRTRANPSLVQAKKDSLRNSQRELQSILDKLASL.

A 'HIGH' region motif is present at residues 47–57; it reads PNVTGILHMGH. Residues 563–567 carry the 'KMSKS' region motif; it reads KLSKS. Residue Lys-566 participates in ATP binding. Residues 874-939 are a coiled coil; it reads EHLAKERVRL…QSILDKLASL (66 aa).

Belongs to the class-I aminoacyl-tRNA synthetase family. ValS type 1 subfamily. As to quaternary structure, monomer.

The protein resides in the cytoplasm. The catalysed reaction is tRNA(Val) + L-valine + ATP = L-valyl-tRNA(Val) + AMP + diphosphate. Functionally, catalyzes the attachment of valine to tRNA(Val). As ValRS can inadvertently accommodate and process structurally similar amino acids such as threonine, to avoid such errors, it has a 'posttransfer' editing activity that hydrolyzes mischarged Thr-tRNA(Val) in a tRNA-dependent manner. The chain is Valine--tRNA ligase from Chlamydia trachomatis serovar L2b (strain UCH-1/proctitis).